The following is a 532-amino-acid chain: Fatty aldehyde dehydrogenase HFD1 (532 aa).

Residue Ser111 is modified to Phosphoserine. A helical transmembrane segment spans residues Ile134–Ala152. Gly214–Gly219 is an NAD(+) binding site. Residues Glu236 and Cys273 contribute to the active site.

This sequence belongs to the aldehyde dehydrogenase family.

The protein resides in the lipid droplet. The protein localises to the mitochondrion outer membrane. It localises to the endosome membrane. Its subcellular location is the cytoplasmic granule membrane. The enzyme catalyses an aldehyde + NAD(+) + H2O = a carboxylate + NADH + 2 H(+). It carries out the reaction hexadecanoate + NADH + 2 H(+) = hexadecanal + NAD(+) + H2O. It catalyses the reaction 4-hydroxybenzaldehyde + NAD(+) + H2O = 4-hydroxybenzoate + NADH + 2 H(+). In terms of biological role, catalyzes the oxidation of long-chain aliphatic aldehydes to fatty acids. Responsible for conversion of the sphingosine 1-phosphate (S1P) degradation product hexadecenal to hexadecenoic acid. Involved in coenzyme Q (CoQ) biosynthesis, catalyzing the last step in the tyrosine to 4-hydroxybenzoate (4-HB) pathway. Oxidizes 4-hydroxybenzaldehyde (4-Hbz) to 4-HB, the aromatic precursor for coenzyme Q. The sequence is that of Fatty aldehyde dehydrogenase HFD1 (HFD1) from Saccharomyces cerevisiae (strain ATCC 204508 / S288c) (Baker's yeast).